The chain runs to 152 residues: MAGSLNKVILIGNVGRDPEIRTTGEGKKIINLSLATTETWKDRITSERKERTEWHRVVIFSEGLVSIVERYVTKGSKLYIEGSLQTRKWNDNSGQEKYTTEVVLQNFNSQLILLDNKNSNNHTQGSGHNEYKYPEIKNHSFDHSDLDDEIPF.

The SSB domain occupies 5–111; it reads LNKVILIGNV…VVLQNFNSQL (107 aa). A DNA-binding region spans residues 54-60; sequence WHRVVIF. Over residues 117-127 the composition is skewed to polar residues; the sequence is KNSNNHTQGSG. The segment at 117–152 is disordered; the sequence is KNSNNHTQGSGHNEYKYPEIKNHSFDHSDLDDEIPF. Residues 129 to 144 are compositionally biased toward basic and acidic residues; it reads NEYKYPEIKNHSFDHS. The Important for interaction with partner proteins motif lies at 147 to 152; the sequence is DDEIPF.

As to quaternary structure, homotetramer.

Plays an important role in DNA replication, recombination and repair. Binds to ssDNA and to an array of partner proteins to recruit them to their sites of action during DNA metabolism. The protein is Single-stranded DNA-binding protein (ssb) of Rickettsia typhi (strain ATCC VR-144 / Wilmington).